The primary structure comprises 256 residues: Thyroid transcription factor 1-associated protein 26 homolog (256 aa).

Disordered stretches follow at residues 1–35 (MAPFKQNAKNKGPIRGKQFNNKFQRGGLSHNAKRK) and 72–190 (RKER…KQEY). Residues 89 to 104 (YPEHLKHLYLAERERL) are compositionally biased toward basic and acidic residues. Positions 136-185 (LGSSSSEKNITNTSTDQTIAPASSNEPAQPESSHKTTFFQRKQNISSYQK) are enriched in polar residues.

Belongs to the TAP26 family.

The chain is Thyroid transcription factor 1-associated protein 26 homolog (ccdc59) from Danio rerio (Zebrafish).